Consider the following 159-residue polypeptide: Insertion element IS136 uncharacterized 16.9 kDa protein (159 aa).

Positions 126 to 142 (RSFVSPSSSTPSTARSS) are enriched in low complexity. The segment at 126–159 (RSFVSPSSSTPSTARSSPGRPLPMQAFPAQTCAT) is disordered.

This Agrobacterium tumefaciens (strain T37) protein is Insertion element IS136 uncharacterized 16.9 kDa protein.